Consider the following 332-residue polypeptide: Methionyl-tRNA formyltransferase (332 aa).

124–127 (SLLP) contacts (6S)-5,6,7,8-tetrahydrofolate.

It belongs to the Fmt family.

It carries out the reaction L-methionyl-tRNA(fMet) + (6R)-10-formyltetrahydrofolate = N-formyl-L-methionyl-tRNA(fMet) + (6S)-5,6,7,8-tetrahydrofolate + H(+). Its function is as follows. Attaches a formyl group to the free amino group of methionyl-tRNA(fMet). The formyl group appears to play a dual role in the initiator identity of N-formylmethionyl-tRNA by promoting its recognition by IF2 and preventing the misappropriation of this tRNA by the elongation apparatus. The polypeptide is Methionyl-tRNA formyltransferase (Polynucleobacter necessarius subsp. necessarius (strain STIR1)).